The sequence spans 41 residues: Cuticle protein 32 (41 aa).

4 consecutive repeat copies span residues 17–20 (AAPA), 25–28 (AAPA), 31–34 (AAPA), and 38–41 (AAPA).

Its function is as follows. Component of the cuticle of migratory locust which contains more than 100 different structural proteins. In Locusta migratoria (Migratory locust), this protein is Cuticle protein 32.